The chain runs to 126 residues: C-type natriuretic peptide (126 aa).

Positions Met1–Ala23 are cleaved as a signal peptide. The disordered stretch occupies residues Pro20–Leu71. Residues Lys24 to Arg73 constitute a propeptide that is removed on maturation. Over residues Gly26–Pro35 the composition is skewed to pro residues. Positions Ala46–Ala62 are enriched in gly residues. An intrachain disulfide couples Cys110 to Cys126.

The protein belongs to the natriuretic peptide family. Post-translationally, degraded by IDE (in vitro).

The protein localises to the secreted. Hormone which plays a role in endochondral ossification through regulation of cartilaginous growth plate chondrocytes proliferation and differentiation. May also be vasoactive and natriuretic. Acts by specifically binding and stimulating NPR2 to produce cGMP. Binds the clearance receptor NPR3. In Ovis aries (Sheep), this protein is C-type natriuretic peptide (NPPC).